The sequence spans 239 residues: MKIDILTLFPEMFSPLEHSIVGKAREKGLLDIQYHNFRENAEKARHVDDEPYGGGQGMLLRAQPIFDSFDAIEKKNPRVILLDPAGKQFDQVYAEDLAQEEELIFICGHYEGYDERIKTLVTDEISLGDYVLTGGELAAMTMIDATVRLIPEVIGKESSHQDDSFSSGLLEYPQYTRPYDYRGMVVPDVLMSGHHEKIRQWRLYESLKKTYERRPDLLEHYQLTVEEEKMLAEIKENKE.

S-adenosyl-L-methionine contacts are provided by residues Gly-108 and 127-132 (LGDYVL).

This sequence belongs to the RNA methyltransferase TrmD family. As to quaternary structure, homodimer.

Its subcellular location is the cytoplasm. It catalyses the reaction guanosine(37) in tRNA + S-adenosyl-L-methionine = N(1)-methylguanosine(37) in tRNA + S-adenosyl-L-homocysteine + H(+). Specifically methylates guanosine-37 in various tRNAs. The protein is tRNA (guanine-N(1)-)-methyltransferase of Streptococcus pneumoniae (strain P1031).